The primary structure comprises 499 residues: Nuclear receptor-binding protein 2 (499 aa).

A disordered region spans residues 1-31 (MAAPEPAPRRGREREREDESEDESDILEESP). Over residues 7–17 (APRRGRERERE) the composition is skewed to basic and acidic residues. Residues 18 to 28 (DESEDESDILE) are compositionally biased toward acidic residues. The Protein kinase domain occupies 36–304 (QKRREQVNQG…AHNLLFHRVL (269 aa)). The tract at residues 396-416 (APPPEEAQKAKTPTPEPFDSE) is disordered. Phosphothreonine is present on residues threonine 407 and threonine 409.

The protein belongs to the protein kinase superfamily. Ser/Thr protein kinase family. As to expression, expressed in Purkinje cells of the cerebellum and neurons in the CA3 region of the hippocampus. Also detected in non-neural tissues including mesenchymal layer adjacent to epithelium in developing bronchi of the lung, the epithelium of the stomach as well as cells in the liver.

It is found in the cytoplasm. Functionally, may regulate apoptosis of neural progenitor cells during their differentiation. The chain is Nuclear receptor-binding protein 2 from Mus musculus (Mouse).